Reading from the N-terminus, the 94-residue chain is Small ribosomal subunit protein uS17 (94 aa).

Positions 1–22 (MASSSTEGQAAARGRKKSWTGK) are disordered.

The protein belongs to the universal ribosomal protein uS17 family. Part of the 30S ribosomal subunit.

Functionally, one of the primary rRNA binding proteins, it binds specifically to the 5'-end of 16S ribosomal RNA. The polypeptide is Small ribosomal subunit protein uS17 (Chlorobium luteolum (strain DSM 273 / BCRC 81028 / 2530) (Pelodictyon luteolum)).